The sequence spans 304 residues: Neurexophilin-4 (304 aa).

Positions Met1–Gly23 are cleaved as a signal peptide. Residues Gln24 to Gly84 form an II region. Residues Asn72, Asn133, Asn143, and Asn149 are each glycosylated (N-linked (GlcNAc...) asparagine). Residues Gly85 to Phe163 form an III region. An IV (linker domain) region spans residues Gly164–Gly220. Residues Ala221–Gly304 form a v (Cys-rich) region.

The protein belongs to the neurexophilin family. Post-translationally, may be proteolytically processed in neuron-like cells. Brain and kidney.

The protein resides in the secreted. May be signaling molecules that resemble neuropeptides and that act by binding to alpha-neurexins and possibly other receptors. This is Neurexophilin-4 (Nxph4) from Rattus norvegicus (Rat).